A 384-amino-acid polypeptide reads, in one-letter code: 2-isopropylmalate synthase 2 (384 aa).

One can recognise a Pyruvate carboxyltransferase domain in the interval 9–260 (VYIVDTTLRD…DLGIDTSRFR (252 aa)). Residues D18, H198, H200, and N234 each contribute to the Mn(2+) site.

It belongs to the alpha-IPM synthase/homocitrate synthase family. LeuA type 1 subfamily. As to quaternary structure, homodimer. Requires Mn(2+) as cofactor.

The protein localises to the cytoplasm. It catalyses the reaction 3-methyl-2-oxobutanoate + acetyl-CoA + H2O = (2S)-2-isopropylmalate + CoA + H(+). The protein operates within amino-acid biosynthesis; L-leucine biosynthesis; L-leucine from 3-methyl-2-oxobutanoate: step 1/4. Functionally, catalyzes the condensation of the acetyl group of acetyl-CoA with 3-methyl-2-oxobutanoate (2-ketoisovalerate) to form 3-carboxy-3-hydroxy-4-methylpentanoate (2-isopropylmalate). The chain is 2-isopropylmalate synthase 2 from Caldanaerobacter subterraneus subsp. tengcongensis (strain DSM 15242 / JCM 11007 / NBRC 100824 / MB4) (Thermoanaerobacter tengcongensis).